Consider the following 1048-residue polypeptide: NACHT, LRR and PYD domains-containing protein 8 (1048 aa).

Residues 1–23 (MSDVNPPSDTPIPFSSSSTHSSH) form a disordered region. Over residues 11–23 (PIPFSSSSTHSSH) the composition is skewed to low complexity. The Pyrin domain occupies 33 to 131 (PGSPCENGVM…NAILPTLEPE (99 aa)). Residues 204-527 (KTVAIQGAPG…FYVLCFPQRL (324 aa)) form the NACHT domain. 210-217 (GAPGIGKT) serves as a coordination point for ATP. LRR repeat units lie at residues 815–838 (NGHL…YLSV), 839–861 (AQLE…SLAS), 866–890 (SKML…IWNA), 923–950 (NKTL…ALKN), and 980–1007 (NQHL…AFSS). Positions 1029–1048 (PTPHPPDFTGKSDCLSQINP) are disordered.

Belongs to the NLRP family.

It is found in the cytoplasm. Involved in inflammation. The protein is NACHT, LRR and PYD domains-containing protein 8 (NLRP8) of Homo sapiens (Human).